Reading from the N-terminus, the 297-residue chain is Nucleotide-binding protein Bphyt_0592 (297 aa).

8-15 (GISGSGKS) is a binding site for ATP. Residue 57-60 (DARS) coordinates GTP.

The protein belongs to the RapZ-like family.

Its function is as follows. Displays ATPase and GTPase activities. The chain is Nucleotide-binding protein Bphyt_0592 from Paraburkholderia phytofirmans (strain DSM 17436 / LMG 22146 / PsJN) (Burkholderia phytofirmans).